We begin with the raw amino-acid sequence, 327 residues long: Protein EMSY-LIKE 1 (327 aa).

An ENT domain is found at Met-1–Leu-88. Positions Glu-32–Lys-58 form a coiled coil. 2 disordered regions span residues Gly-206–Ile-257 and Ala-305–Gly-327. A compositionally biased stretch (basic residues) spans Gly-214–Gln-232. A coiled-coil region spans residues Leu-281–Asp-306. Position 308 is a phosphoserine (Ser-308). Residues Tyr-318–Gly-327 show a composition bias toward basic and acidic residues.

In terms of assembly, isoform 1 interacts with EDM2 in nucleus.

The protein resides in the nucleus. Its function is as follows. Probably involved in the regulation of chromatin states. Contributes to RPP7-mediated and basal immunity, especially against Hyaloperonospora arabidopsidis isolate Hiks1. Regulates negatively EDM2-dependent floral transition. In Arabidopsis thaliana (Mouse-ear cress), this protein is Protein EMSY-LIKE 1.